The sequence spans 664 residues: UvrABC system protein B (664 aa).

The region spanning 23–180 (EGLNRGMRFQ…ERLARIGYQR (158 aa)) is the Helicase ATP-binding domain. Residue 36–43 (GVTGSGKT) participates in ATP binding. The short motif at 89-112 (YYDYYQPEAYIPTKDLYIEKNADI) is the Beta-hairpin element. The Helicase C-terminal domain occupies 429–588 (DLVNEIVKVK…ITPRSVIKPL (160 aa)). The 36-residue stretch at 622-657 (EEYMAVLEEEMYRAASELRYEDAAALRDELFRIREE) folds into the UVR domain.

Belongs to the UvrB family. As to quaternary structure, forms a heterotetramer with UvrA during the search for lesions. Interacts with UvrC in an incision complex.

It localises to the cytoplasm. In terms of biological role, the UvrABC repair system catalyzes the recognition and processing of DNA lesions. A damage recognition complex composed of 2 UvrA and 2 UvrB subunits scans DNA for abnormalities. Upon binding of the UvrA(2)B(2) complex to a putative damaged site, the DNA wraps around one UvrB monomer. DNA wrap is dependent on ATP binding by UvrB and probably causes local melting of the DNA helix, facilitating insertion of UvrB beta-hairpin between the DNA strands. Then UvrB probes one DNA strand for the presence of a lesion. If a lesion is found the UvrA subunits dissociate and the UvrB-DNA preincision complex is formed. This complex is subsequently bound by UvrC and the second UvrB is released. If no lesion is found, the DNA wraps around the other UvrB subunit that will check the other stand for damage. The polypeptide is UvrABC system protein B (Thermotoga petrophila (strain ATCC BAA-488 / DSM 13995 / JCM 10881 / RKU-1)).